The chain runs to 588 residues: Sulfite reductase [NADPH] hemoprotein beta-component (588 aa).

[4Fe-4S] cluster is bound by residues cysteine 442, cysteine 448, cysteine 487, and cysteine 491. Cysteine 491 serves as a coordination point for siroheme.

The protein belongs to the nitrite and sulfite reductase 4Fe-4S domain family. As to quaternary structure, alpha(8)-beta(8). The alpha component is a flavoprotein, the beta component is a hemoprotein. Siroheme is required as a cofactor. [4Fe-4S] cluster serves as cofactor.

The enzyme catalyses hydrogen sulfide + 3 NADP(+) + 3 H2O = sulfite + 3 NADPH + 4 H(+). Its pathway is sulfur metabolism; hydrogen sulfide biosynthesis; hydrogen sulfide from sulfite (NADPH route): step 1/1. Its function is as follows. Component of the sulfite reductase complex that catalyzes the 6-electron reduction of sulfite to sulfide. This is one of several activities required for the biosynthesis of L-cysteine from sulfate. This is Sulfite reductase [NADPH] hemoprotein beta-component from Actinobacillus pleuropneumoniae serotype 5b (strain L20).